A 231-amino-acid chain; its full sequence is Ferredoxin-type protein NapG (231 aa).

A signal peptide (tat-type signal) is located at residues 1–41 (MSRSAKPQNGRRRFLRDVVRTAGGLAAVGVALGLQQQTARA). 4 consecutive 4Fe-4S ferredoxin-type domains span residues 50–81 (GAINENAFASACVRCGQCVQACPYDTLKLATL), 89–121 (TPYFVARDIPCEMCEDIPCAKVCPSGALDREIE), 130–166 (LAVLVDQENCLNFQGLRCDVCYRECPKIDEAITLELE), and 177–208 (FLPTVHSDACTGCGKCEKVCVLEQPAIKVLPL). [4Fe-4S] cluster is bound by residues C61, C64, C67, C71, C99, C102, C107, C111, C139, C147, C150, C154, C186, C189, C192, and C196.

It depends on [4Fe-4S] cluster as a cofactor. Post-translationally, exported by the Tat system. The position of the signal peptide cleavage has not been experimentally proven.

The protein resides in the periplasm. In terms of biological role, required for electron transfer from ubiquinol, via NapC, to the periplasmic nitrate reductase NapAB complex. This Escherichia coli (strain K12) protein is Ferredoxin-type protein NapG (napG).